Consider the following 209-residue polypeptide: Uracil phosphoribosyltransferase (209 aa).

Residues arginine 79, arginine 104, and 131 to 139 (DPMLATGGS) each bind 5-phospho-alpha-D-ribose 1-diphosphate. Uracil is bound by residues isoleucine 194 and 199–201 (GDA). Aspartate 200 contributes to the 5-phospho-alpha-D-ribose 1-diphosphate binding site.

This sequence belongs to the UPRTase family. Mg(2+) serves as cofactor.

The catalysed reaction is UMP + diphosphate = 5-phospho-alpha-D-ribose 1-diphosphate + uracil. It functions in the pathway pyrimidine metabolism; UMP biosynthesis via salvage pathway; UMP from uracil: step 1/1. With respect to regulation, allosterically activated by GTP. Functionally, catalyzes the conversion of uracil and 5-phospho-alpha-D-ribose 1-diphosphate (PRPP) to UMP and diphosphate. This is Uracil phosphoribosyltransferase from Exiguobacterium sibiricum (strain DSM 17290 / CCUG 55495 / CIP 109462 / JCM 13490 / 255-15).